The following is a 93-amino-acid chain: Acylphosphatase (93 aa).

One can recognise an Acylphosphatase-like domain in the interval 7–93 (RLTAWVHGWV…TEQITGFSER (87 aa)). Active-site residues include Arg22 and Asn40.

Belongs to the acylphosphatase family.

The catalysed reaction is an acyl phosphate + H2O = a carboxylate + phosphate + H(+). The polypeptide is Acylphosphatase (acyP) (Mycobacterium tuberculosis (strain ATCC 25177 / H37Ra)).